Consider the following 83-residue polypeptide: Small ribosomal subunit protein bS18 (83 aa).

Belongs to the bacterial ribosomal protein bS18 family. Part of the 30S ribosomal subunit. Forms a tight heterodimer with protein bS6.

Binds as a heterodimer with protein bS6 to the central domain of the 16S rRNA, where it helps stabilize the platform of the 30S subunit. The sequence is that of Small ribosomal subunit protein bS18 from Methylobacterium radiotolerans (strain ATCC 27329 / DSM 1819 / JCM 2831 / NBRC 15690 / NCIMB 10815 / 0-1).